A 236-amino-acid chain; its full sequence is 2,3,4,5-tetrahydropyridine-2,6-dicarboxylate N-acetyltransferase (236 aa).

It belongs to the transferase hexapeptide repeat family. DapH subfamily.

The catalysed reaction is (S)-2,3,4,5-tetrahydrodipicolinate + acetyl-CoA + H2O = L-2-acetamido-6-oxoheptanedioate + CoA. It functions in the pathway amino-acid biosynthesis; L-lysine biosynthesis via DAP pathway; LL-2,6-diaminopimelate from (S)-tetrahydrodipicolinate (acetylase route): step 1/3. Functionally, catalyzes the transfer of an acetyl group from acetyl-CoA to tetrahydrodipicolinate. This is 2,3,4,5-tetrahydropyridine-2,6-dicarboxylate N-acetyltransferase from Listeria ivanovii.